The chain runs to 235 residues: Transcriptional regulatory protein CseB (235 aa).

The region spanning 6 to 119 (HVLFVEDDDV…VLVARIRAVL (114 aa)) is the Response regulatory domain. At D55 the chain carries 4-aspartylphosphate. The segment at residues 141 to 235 (GGVLTFGELE…VRGFGYKLKA (95 aa)) is a DNA-binding region (ompR/PhoB-type).

Phosphorylated by CseC.

The protein localises to the cytoplasm. Functionally, member of the two-component regulatory system CseB/CseC involved in the stability of the cell envelope. CseB activates transcription of RNA polymerase sigma-E factor, in response to changes in the cell envelope. The polypeptide is Transcriptional regulatory protein CseB (cseB) (Streptomyces avermitilis (strain ATCC 31267 / DSM 46492 / JCM 5070 / NBRC 14893 / NCIMB 12804 / NRRL 8165 / MA-4680)).